Here is a 426-residue protein sequence, read N- to C-terminus: Actin-like protein 6B (426 aa).

The tract at residues 39-82 (TTVGLLAAEEGGGLELEGEKEKKGKIFHIDTNALHVPRDGAEVM) is essential for mediating its function in dendritic development; may contribute to neuronal-specific targeting.

It belongs to the actin family. In terms of assembly, component of the multiprotein chromatin-remodeling complexes SWI/SNF: SWI/SNF-A (BAF), SWI/SNF-B (PBAF) and related complexes. The canonical complex contains a catalytic subunit (either SMARCA4/BRG1/BAF190A or SMARCA2/BRM/BAF190B) and at least SMARCE1, ACTL6A/BAF53, SMARCC1/BAF155, SMARCC2/BAF170, and SMARCB1/SNF5/BAF47. Other subunits specific to each of the complexes may also be present permitting several possible combinations developmentally and tissue specific. Component of the BAF complex, which includes at least actin (ACTB), ARID1A/BAF250A, ARID1B/BAF250B, SMARCA2/BRM, SMARCA4/BRG1/BAF190A, ACTL6A/BAF53, ACTL6B/BAF53B, SMARCE1/BAF57, SMARCC1/BAF155, SMARCC2/BAF170, SMARCB1/SNF5/INI1, and one or more SMARCD1/BAF60A, SMARCD2/BAF60B, or SMARCD3/BAF60C. Component of neuron-specific chromatin remodeling complex (nBAF complex) composed of at least, ARID1A/BAF250A or ARID1B/BAF250B, SMARCD1/BAF60A or SMARCD2/BAF60B or SMARCD3/BAF60C, SMARCA2/BRM/BAF190B, SMARCA4/BRG1/BAF190A, SMARCB1/BAF47, SMARCC1/BAF155, SMARCE1/BAF57, SMARCC2/BAF170, DPF1/BAF45B, DPF3/BAF45C, ACTL6B/BAF53B and actin (ACTB). Note that the nBAF complex is polymorphic in regard to the ATPase, SMARCA2 and SMARCA4 occupying mutually exclusive positions. May be a component of the SWI/SNF-B (PBAF) chromatin remodeling complex, at least composed of SMARCA4/BRG1, SMARCB1/BAF47/SNF5, ACTL6A/BAF53A or ACTL6B/BAF53B, SMARCE1/BAF57, SMARCD1/BAF60A, SMARCD2/BAF60B, perhaps SMARCD3/BAF60C, SMARCC1/BAF155, SMARCC2/BAF170, PBRM1/BAF180, ARID2/BAF200 and actin.

The protein resides in the nucleus. Functionally, involved in transcriptional activation and repression of select genes by chromatin remodeling (alteration of DNA-nucleosome topology). Component of SWI/SNF chromatin remodeling complexes that carry out key enzymatic activities, changing chromatin structure by altering DNA-histone contacts within a nucleosome in an ATP-dependent manner. Belongs to the neuron-specific chromatin remodeling complex (nBAF complex), as such plays a role in remodeling mononucleosomes in an ATP-dependent fashion, and is required for postmitotic neural development and dendritic outgrowth. During neural development a switch from a stem/progenitor to a postmitotic chromatin remodeling mechanism occurs as neurons exit the cell cycle and become committed to their adult state. The transition from proliferating neural stem/progenitor cells to postmitotic neurons requires a switch in subunit composition of the npBAF and nBAF complexes. As neural progenitors exit mitosis and differentiate into neurons, npBAF complexes which contain ACTL6A/BAF53A and PHF10/BAF45A, are exchanged for homologous alternative ACTL6B/BAF53B and DPF1/BAF45B or DPF3/BAF45C subunits in neuron-specific complexes (nBAF). The npBAF complex is essential for the self-renewal/proliferative capacity of the multipotent neural stem cells. The nBAF complex along with CREST plays a role regulating the activity of genes essential for dendrite growth. ACTL6B/BAF53B is not essential for assembly of the nBAF complex but is required for targeting the complex and CREST to the promoter of genes essential for dendritic growth. Essential for neuronal maturation and dendrite development. This chain is Actin-like protein 6B (ACTL6B), found in Bos taurus (Bovine).